Consider the following 972-residue polypeptide: Multiple C2 domain and transmembrane region protein 8 (972 aa).

The C2 1 domain occupies 1–107 (MMSNLKLGVE…PYSEAVGLPY (107 aa)). The segment at 142–203 (PNLISTKKIP…MMESSLYQAP (62 aa)) is disordered. Over residues 150–159 (IPSKSRHKFH) the composition is skewed to basic residues. Residues 161–173 (IPTNESNHSPRGN) are compositionally biased toward polar residues. The segment covering 179-194 (PQPPPPQSQTALPPPM) has biased composition (pro residues). 3 consecutive C2 domains span residues 232-352 (GGGK…PEWY), 384-507 (ALNA…NRWF), and 543-669 (YSSD…SHSY). Residues D265, D271, D318, D320, and D325 each coordinate Ca(2+). The next 2 helical transmembrane spans lie at 803–823 (IIFLVLVCSPEMILPVMSLCL) and 924–944 (TVVLYVVPFKVFVLLAGLYIM).

The protein belongs to the MCTP family. It depends on Ca(2+) as a cofactor. In terms of tissue distribution, expressed in root hairs.

It localises to the membrane. It is found in the vesicle. May function as a signaling molecule by regulating the trafficking of other regulators. This Arabidopsis thaliana (Mouse-ear cress) protein is Multiple C2 domain and transmembrane region protein 8.